Here is a 136-residue protein sequence, read N- to C-terminus: MAKKAGSKLPKRKEEFTYRGYRVSELAKMRLEEIAELLPSRQRRTLRRGLSKEHRKFMAKLRARGTAKTHLRDAIVLPEMVGKVVEIHNGKTFQRVEIIPEMIGHYLGEYALTRARVIHGAAGVGATRSSKFVPLK.

This sequence belongs to the universal ribosomal protein uS19 family.

Its function is as follows. Protein S19 forms a complex with S13 that binds strongly to the 16S ribosomal RNA. The chain is Small ribosomal subunit protein uS19 from Methanothrix thermoacetophila (strain DSM 6194 / JCM 14653 / NBRC 101360 / PT) (Methanosaeta thermophila).